A 354-amino-acid polypeptide reads, in one-letter code: Ion-translocating oxidoreductase complex subunit D (354 aa).

5 helical membrane-spanning segments follow: residues I19–G39, F40–V60, F70–P89, Y94–G116, and A123–A143. T186 carries the FMN phosphoryl threonine modification. Transmembrane regions (helical) follow at residues L215–V235, W242–F262, M266–A286, L300–P320, and D321–T341.

It belongs to the NqrB/RnfD family. As to quaternary structure, the complex is composed of six subunits: RnfA, RnfB, RnfC, RnfD, RnfE and RnfG. FMN is required as a cofactor.

Its subcellular location is the cell inner membrane. Part of a membrane-bound complex that couples electron transfer with translocation of ions across the membrane. The chain is Ion-translocating oxidoreductase complex subunit D from Mannheimia succiniciproducens (strain KCTC 0769BP / MBEL55E).